Here is a 188-residue protein sequence, read N- to C-terminus: Elongation factor P-like protein (188 aa).

Belongs to the elongation factor P family.

This chain is Elongation factor P-like protein, found in Saccharophagus degradans (strain 2-40 / ATCC 43961 / DSM 17024).